The sequence spans 1029 residues: U2 snRNP-associated SURP motif-containing protein (1029 aa).

2 disordered regions span residues 1 to 110 (MADK…KEDE) and 141 to 273 (VNAA…DPST). Residue alanine 2 is modified to N-acetylalanine. Residues 7–16 (GGSQKASSKN) show a composition bias toward polar residues. Basic residues predominate over residues 45–54 (TRPKSPRKHN). The segment covering 55–64 (YRNESSRESL) has biased composition (basic and acidic residues). The residue at position 67 (serine 67) is a Phosphoserine. Residue lysine 80 forms a Glycyl lysine isopeptide (Lys-Gly) (interchain with G-Cter in SUMO2) linkage. A coiled-coil region spans residues 92-121 (AKRTLSKKEQEELKKKEDEKAAAEIYEEFL). Basic and acidic residues-rich tracts occupy residues 97-110 (SKKEQEELKKKEDE) and 144-155 (AKDEHETDEKRG). Residues lysine 145 and lysine 168 each participate in a glycyl lysine isopeptide (Lys-Gly) (interchain with G-Cter in SUMO2) cross-link. The span at 169 to 178 (NPPNQSSNER) shows a compositional bias: polar residues. Residues 186-222 (ETKKPPLKKGEKEKKKSNLELFKEELKQIQEERDERH) show a composition bias toward basic and acidic residues. A coiled-coil region spans residues 192–232 (LKKGEKEKKKSNLELFKEELKQIQEERDERHKTKGRLSRFE). Position 202 is a phosphoserine (serine 202). Residue lysine 208 forms a Glycyl lysine isopeptide (Lys-Gly) (interchain with G-Cter in SUMO2) linkage. Residue serine 236 is modified to Phosphoserine. Over residues 239–249 (DGQRRSMDVPS) the composition is skewed to basic and acidic residues. Residues 274–355 (TNLYLGNINP…FEMKLGWGKA (82 aa)) form the RRM domain. The SURP motif repeat unit spans residues 430-473 (LIHRMIEFVVREGPMFEAMIMNREINNPMFRFLFENQTPAHVYY). A Phosphoserine modification is found at serine 485. One can recognise a CID domain in the interval 534 to 679 (LKEEQRDKLE…KLQNIFLGLV (146 aa)). The segment at 704 to 729 (DGAPLEDVDGIPIDATPIDDLDGVPI) is disordered. Threonine 719 carries the post-translational modification Phosphothreonine. Glycyl lysine isopeptide (Lys-Gly) (interchain with G-Cter in SUMO2) cross-links involve residues lysine 748 and lysine 749. The residue at position 760 (lysine 760) is an N6-acetyllysine; alternate. Lysine 760 is covalently cross-linked (Glycyl lysine isopeptide (Lys-Gly) (interchain with G-Cter in SUMO2); alternate). Disordered regions lie at residues 778-841 (KWEL…EEKR) and 855-1029 (QDEL…KNKH). Over residues 786-806 (EESEEEENQNQEEESEDEEDT) the composition is skewed to acidic residues. A phosphoserine mark is found at serine 788, serine 800, and serine 811. 2 stretches are compositionally biased toward basic and acidic residues: residues 810-841 (KSEEHHLYSNPVREEATESKFSKYSEMSEEKR) and 874-922 (QVEH…TPTR). Glycyl lysine isopeptide (Lys-Gly) (interchain with G-Cter in SUMO2) cross-links involve residues lysine 829 and lysine 832. Residues 837–915 (SEEKRAKLRE…ESRSKDKKEK (79 aa)) adopt a coiled-coil conformation. Phosphothreonine is present on threonine 931. Serine 946 and serine 948 each carry phosphoserine. Over residues 950–980 (KSERSERSERSHKESSRSRSSHKDSPRDASK) the composition is skewed to basic and acidic residues. A compositionally biased stretch (basic residues) spans 991–1029 (TPKRSRRSRSRSPKKSGKKSRSQSRSPHRSHKKSKKNKH).

The protein belongs to the splicing factor SR family. As to quaternary structure, interacts with ERBB4.

It is found in the nucleus. This is U2 snRNP-associated SURP motif-containing protein (U2surp) from Mus musculus (Mouse).